A 288-amino-acid chain; its full sequence is ATP synthase gamma chain (288 aa).

The protein belongs to the ATPase gamma chain family. As to quaternary structure, F-type ATPases have 2 components, CF(1) - the catalytic core - and CF(0) - the membrane proton channel. CF(1) has five subunits: alpha(3), beta(3), gamma(1), delta(1), epsilon(1). CF(0) has three main subunits: a, b and c.

The protein localises to the cell inner membrane. Produces ATP from ADP in the presence of a proton gradient across the membrane. The gamma chain is believed to be important in regulating ATPase activity and the flow of protons through the CF(0) complex. The protein is ATP synthase gamma chain of Legionella pneumophila (strain Corby).